The sequence spans 213 residues: Skin granule protein (213 aa).

Positions 1–26 (METMYHRFLCIPFLLILGLAQGQSKG) are cleaved as a signal peptide. Repeat copies occupy residues 27–48 (LQTVTTFRTGLKPIDVTAIRTG), 49–70 (LQPIATFHTGQKPIDVTAIRTG), and 71–92 (LQPIATFHTGLQPVDVTAIRTG). Positions 27-104 (LQTVTTFRTG…PIATFQTGVQ (78 aa)) are 4 X 22 AA approximate tandem repeats. One copy of the 4; truncated repeat lies at 93–104 (LQPIATFQTGVQ). The disordered stretch occupies residues 162-213 (WHGGRNGHKMKKLGKKKHHKNRHGGKNHHKMKKIGKHHGGGRKFGKKHRHHK). Positions 166-213 (RNGHKMKKLGKKKHHKNRHGGKNHHKMKKIGKHHGGGRKFGKKHRHHK) are enriched in basic residues.

The protein resides in the secreted. This is Skin granule protein (sgp) from Xenopus laevis (African clawed frog).